Consider the following 439-residue polypeptide: tRNA modification GTPase MnmE (439 aa).

3 residues coordinate (6S)-5-formyl-5,6,7,8-tetrahydrofolate: R20, E78, and K116. One can recognise a TrmE-type G domain in the interval 211–364 (GIYVAILGEP…LLSAIQKKVE (154 aa)). GTP-binding positions include 221-226 (NSGKST), 240-246 (SEYAGTT), and 265-268 (DTAG). Residues S225 and T246 each contribute to the Mg(2+) site. (6S)-5-formyl-5,6,7,8-tetrahydrofolate is bound at residue K439.

The protein belongs to the TRAFAC class TrmE-Era-EngA-EngB-Septin-like GTPase superfamily. TrmE GTPase family. Homodimer. Heterotetramer of two MnmE and two MnmG subunits. Requires K(+) as cofactor.

The protein resides in the cytoplasm. Its function is as follows. Exhibits a very high intrinsic GTPase hydrolysis rate. Involved in the addition of a carboxymethylaminomethyl (cmnm) group at the wobble position (U34) of certain tRNAs, forming tRNA-cmnm(5)s(2)U34. This is tRNA modification GTPase MnmE from Ehrlichia ruminantium (strain Gardel).